The sequence spans 294 residues: ATP synthase gamma chain (294 aa).

This sequence belongs to the ATPase gamma chain family. F-type ATPases have 2 components, CF(1) - the catalytic core - and CF(0) - the membrane proton channel. CF(1) has five subunits: alpha(3), beta(3), gamma(1), delta(1), epsilon(1). CF(0) has three main subunits: a, b and c.

It localises to the cell inner membrane. In terms of biological role, produces ATP from ADP in the presence of a proton gradient across the membrane. The gamma chain is believed to be important in regulating ATPase activity and the flow of protons through the CF(0) complex. The polypeptide is ATP synthase gamma chain (Campylobacter jejuni subsp. doylei (strain ATCC BAA-1458 / RM4099 / 269.97)).